Consider the following 267-residue polypeptide: Urease accessory protein UreD 2 (267 aa).

This sequence belongs to the UreD family. As to quaternary structure, ureD, UreF and UreG form a complex that acts as a GTP-hydrolysis-dependent molecular chaperone, activating the urease apoprotein by helping to assemble the nickel containing metallocenter of UreC. The UreE protein probably delivers the nickel.

Its subcellular location is the cytoplasm. Functionally, required for maturation of urease via the functional incorporation of the urease nickel metallocenter. This is Urease accessory protein UreD 2 from Synechococcus sp. (strain JA-3-3Ab) (Cyanobacteria bacterium Yellowstone A-Prime).